The following is a 508-amino-acid chain: Light-independent protochlorophyllide reductase subunit B (508 aa).

Asp-36 serves as a coordination point for [4Fe-4S] cluster. Asp-294 (proton donor) is an active-site residue. 429–430 (GM) provides a ligand contact to substrate.

Belongs to the ChlB/BchB/BchZ family. In terms of assembly, protochlorophyllide reductase is composed of three subunits; ChlL, ChlN and ChlB. Forms a heterotetramer of two ChlB and two ChlN subunits. [4Fe-4S] cluster serves as cofactor.

The protein resides in the plastid. The protein localises to the chloroplast. The catalysed reaction is chlorophyllide a + oxidized 2[4Fe-4S]-[ferredoxin] + 2 ADP + 2 phosphate = protochlorophyllide a + reduced 2[4Fe-4S]-[ferredoxin] + 2 ATP + 2 H2O. It participates in porphyrin-containing compound metabolism; chlorophyll biosynthesis (light-independent). Functionally, component of the dark-operative protochlorophyllide reductase (DPOR) that uses Mg-ATP and reduced ferredoxin to reduce ring D of protochlorophyllide (Pchlide) to form chlorophyllide a (Chlide). This reaction is light-independent. The NB-protein (ChlN-ChlB) is the catalytic component of the complex. This is Light-independent protochlorophyllide reductase subunit B from Pyropia yezoensis (Susabi-nori).